The following is a 336-amino-acid chain: MTIKVAINGYGRIGRNVLRAHYEGGKRHDLEIVAINDLGNAATNAHLTQYDTVHGRFPGEVSVDGDAFRVNGDRIRVLAQRNPAELPWGELGVDVVMECTGLFTSKEKASAHLKGGAKKVIISAPGGKDVDATIVYGVNHGVLKATDTVISNASCTTNCLAPLVKPLHEKLGVVNGLMTTVHSYTNDQVLTDVYHEDLRRARSATMSMIPTKTGAAAAVGLVMPELDGRLDGFAVRVPTINVSLVDLSFVAARPTTVEEVNGILKAAAEGELKGILDYNTAPLVSVDFNHNPASSTFDATLTKVNGTLVKVSAWYDNEWGFSNRMLDTAVALAHAR.

NAD(+) is bound by residues 12-13, aspartate 37, arginine 81, and serine 123; that span reads RI. D-glyceraldehyde 3-phosphate-binding positions include 154-156 and threonine 185; that span reads SCT. The active-site Nucleophile is cysteine 155. Asparagine 186 contacts NAD(+). Residues arginine 200, 213–214, and arginine 236 each bind D-glyceraldehyde 3-phosphate; that span reads TG. Asparagine 317 serves as a coordination point for NAD(+).

The protein belongs to the glyceraldehyde-3-phosphate dehydrogenase family. In terms of assembly, homotetramer.

It catalyses the reaction D-glyceraldehyde 3-phosphate + phosphate + NAD(+) = (2R)-3-phospho-glyceroyl phosphate + NADH + H(+). It functions in the pathway carbohydrate biosynthesis; Calvin cycle. Functionally, could be involved in carbon fixation as a component of the Calvin cycle. Catalyzes the oxidative phosphorylation of glyceraldehyde 3-phosphate (G3P) to 1,3-bisphosphoglycerate (BPG) using the cofactor NAD. The first reaction step involves the formation of a hemiacetal intermediate between G3P and a cysteine residue, and this hemiacetal intermediate is then oxidized to a thioester, with concomitant reduction of NAD to NADH. The reduced NADH is then exchanged with the second NAD, and the thioester is attacked by a nucleophilic inorganic phosphate to produce BPG. This chain is Glyceraldehyde-3-phosphate dehydrogenase, plasmid (cbbGP), found in Cupriavidus necator (strain ATCC 17699 / DSM 428 / KCTC 22496 / NCIMB 10442 / H16 / Stanier 337) (Ralstonia eutropha).